Consider the following 417-residue polypeptide: Prostaglandin E2 receptor EP3 subtype (417 aa).

Over 1–52 the chain is Extracellular; it reads MKATRDHASAPFCTRFNHSDPGIWAAERAVEAPNNLTLPPEPSEDCGSVSVA. Residues N17 and N35 are each glycosylated (N-linked (GlcNAc...) asparagine). A helical membrane pass occupies residues 53 to 77; sequence FSMTMMITGFVGNALAITLVSKSYR. Residues 78 to 90 are Cytoplasmic-facing; the sequence is RREGKRKKSFLLC. The chain crosses the membrane as a helical span at residues 91 to 111; it reads IGWLALTDMVGQLLTSPVVIV. The Extracellular portion of the chain corresponds to 112–130; it reads LYLSHQRWEQLDPSGRLCT. A helical transmembrane segment spans residues 131-152; sequence FFGLTMTVFGLSSLFIASAMAV. The Cytoplasmic portion of the chain corresponds to 153-174; sequence ERALATRAPHWYSSHMKTSVTR. The chain crosses the membrane as a helical span at residues 175 to 196; the sequence is AVLLGVWLAVLAFALLPVLGVG. At 197-226 the chain is on the extracellular side; the sequence is QYTIQWPGTWCFISTGPGGNGTNSRQNWGN. N-linked (GlcNAc...) asparagine glycosylation occurs at N216. Residues 227 to 252 form a helical membrane-spanning segment; that stretch reads VFFASAFAILGLSALVVTFACNLATI. Over 253-282 the chain is Cytoplasmic; sequence KALVSRCRAKATASQSSAQWGRITTETAIQ. A helical transmembrane segment spans residues 283–306; it reads LMGIMCVLSVCWSPLLIMMLKMIF. An N-linked (GlcNAc...) asparagine glycan is attached at N307. Topologically, residues 307-326 are extracellular; that stretch reads NHTSVEHCKTYTENQDECNF. The helical transmembrane segment at 327–348 threads the bilayer; the sequence is FLIAVRLASLNQILDPWVYLLL. At 349–417 the chain is on the cytoplasmic side; sequence RKILLQKFCQ…HIYLHTLEHQ (69 aa).

The protein belongs to the G-protein coupled receptor 1 family. In terms of assembly, interacts (via C-terminus) with MKLN1.

It localises to the cell membrane. Its function is as follows. Receptor for prostaglandin E2 (PGE2). The various isoforms have identical ligand binding properties but interact with different second messenger systems: isoform EP3A couples to G(i)/G(o) proteins; isoform EP3B and isoform EP3C couple to G(s), and isoform EP3D couples to G(i), G(s) and G(p). Required for normal development of fever in response to pyrinogens, including IL1B, prostaglandin E2 and bacterial lipopolysaccharide (LPS). Required for normal potentiation of platelet aggregation by prostaglandin E2, and thus plays a role in the regulation of blood coagulation. Required for increased HCO3(-) secretion in the duodenum in response to mucosal acidification, and thereby contributes to the protection of the mucosa against acid-induced ulceration. Not required for normal kidney function, normal urine volume and osmolality. This is Prostaglandin E2 receptor EP3 subtype (PTGER3) from Bos taurus (Bovine).